A 145-amino-acid chain; its full sequence is Large ribosomal subunit protein uL13 (145 aa).

The protein belongs to the universal ribosomal protein uL13 family. As to quaternary structure, part of the 50S ribosomal subunit.

This protein is one of the early assembly proteins of the 50S ribosomal subunit, although it is not seen to bind rRNA by itself. It is important during the early stages of 50S assembly. The sequence is that of Large ribosomal subunit protein uL13 from Bacillus pumilus (strain SAFR-032).